We begin with the raw amino-acid sequence, 398 residues long: Acetate kinase 1 (398 aa).

A Mg(2+)-binding site is contributed by N9. K16 serves as a coordination point for ATP. R89 contributes to the substrate binding site. D146 (proton donor/acceptor) is an active-site residue. ATP is bound by residues 206–210 (HLGNG), 281–283 (DCR), and 329–333 (GIGEN). Mg(2+) is bound at residue E384.

It belongs to the acetokinase family. In terms of assembly, homodimer. Mg(2+) serves as cofactor. Mn(2+) is required as a cofactor.

The protein resides in the cytoplasm. The catalysed reaction is acetate + ATP = acetyl phosphate + ADP. It functions in the pathway metabolic intermediate biosynthesis; acetyl-CoA biosynthesis; acetyl-CoA from acetate: step 1/2. Its function is as follows. Catalyzes the formation of acetyl phosphate from acetate and ATP. Can also catalyze the reverse reaction. The polypeptide is Acetate kinase 1 (Vibrio vulnificus (strain CMCP6)).